The following is a 207-amino-acid chain: MSRYRGPRLRIIRRLRNLPGLTNKLIESKKNQASGSDQSNQKKVSQYCIRLEAKQRLRFNYGLTERQLLNYVRIARCAKGSTGQILLQLLEMRLDNILFRLGVVPTIPSARQLINHRHILVNNRIVDIPSFHCKPKDIITIGAPKTYQSIITKRIESFAKDQIPDHLTLSLSEPKKPKGFVNYLINRESIGLKINELLVVEYYSRKA.

Residues 92 to 156 (MRLDNILFRL…YQSIITKRIE (65 aa)) form the S4 RNA-binding domain.

The protein belongs to the universal ribosomal protein uS4 family. Part of the 30S ribosomal subunit. Contacts protein S5. The interaction surface between S4 and S5 is involved in control of translational fidelity.

It is found in the plastid. It localises to the chloroplast. In terms of biological role, one of the primary rRNA binding proteins, it binds directly to 16S rRNA where it nucleates assembly of the body of the 30S subunit. Its function is as follows. With S5 and S12 plays an important role in translational accuracy. The polypeptide is Small ribosomal subunit protein uS4c (rps4) (Equisetum palustre (Marsh horsetail)).